A 158-amino-acid chain; its full sequence is D-aminoacyl-tRNA deacylase (158 aa).

The Gly-cisPro motif, important for rejection of L-amino acids signature appears at 144–145 (GP).

Belongs to the DTD family. In terms of assembly, homodimer.

The protein resides in the cytoplasm. It catalyses the reaction glycyl-tRNA(Ala) + H2O = tRNA(Ala) + glycine + H(+). The enzyme catalyses a D-aminoacyl-tRNA + H2O = a tRNA + a D-alpha-amino acid + H(+). In terms of biological role, an aminoacyl-tRNA editing enzyme that deacylates mischarged D-aminoacyl-tRNAs. Also deacylates mischarged glycyl-tRNA(Ala), protecting cells against glycine mischarging by AlaRS. Acts via tRNA-based rather than protein-based catalysis; rejects L-amino acids rather than detecting D-amino acids in the active site. By recycling D-aminoacyl-tRNA to D-amino acids and free tRNA molecules, this enzyme counteracts the toxicity associated with the formation of D-aminoacyl-tRNA entities in vivo and helps enforce protein L-homochirality. In Corynebacterium kroppenstedtii (strain DSM 44385 / JCM 11950 / CIP 105744 / CCUG 35717), this protein is D-aminoacyl-tRNA deacylase.